Here is a 331-residue protein sequence, read N- to C-terminus: Type 2 lactosamine alpha-2,3-sialyltransferase (331 aa).

The Cytoplasmic portion of the chain corresponds to 1-4; the sequence is MRGY. A helical; Signal-anchor for type II membrane protein membrane pass occupies residues 5-25; sequence LVAIFLSAVFLYYVLHCILWG. The Lumenal segment spans residues 26–331; sequence TNVYWAAPVE…KNLVINLTQD (306 aa). 6 N-linked (GlcNAc...) asparagine glycosylation sites follow: Asn-129, Asn-181, Asn-282, Asn-295, Asn-308, and Asn-327.

Belongs to the glycosyltransferase 29 family.

The protein resides in the golgi apparatus membrane. It catalyses the reaction a neolactoside nLc4Cer(d18:1(4E)) + CMP-N-acetyl-beta-neuraminate = a neolactoside IV(3)-alpha-NeuAc-nLc4Cer(d18:1(4E)) + CMP + H(+). It carries out the reaction a beta-D-galactosyl-(1-&gt;4)-N-acetyl-beta-D-glucosaminyl derivative + CMP-N-acetyl-beta-neuraminate = an N-acetyl-alpha-neuraminyl-(2-&gt;3)-beta-D-galactosyl-(1-&gt;4)-N-acetyl-beta-D-glucosaminyl derivative + CMP + H(+). The catalysed reaction is a neolactoside nLc6Cer(d18:1(4E)) + CMP-N-acetyl-beta-neuraminate = a neolactoside VI(3)-alpha-NeuNAc-nLc6Cer(d18:1(4E)) + CMP + H(+). Functionally, transfers the sialyl residue from CMP-N-acetyl-beta-neuraminate to the terminal galactose residue on sugar chains of glycoproteins and glycolipids. It's alpha-2,3-sialyltransferase activity is specific toward type II glycan chains (Galbeta1-4GlcNAc) on glycoproteins and glycolipids such as neolactosides nLc4Cer and nLc6Cer, whose sialyl-products serve as precursors for the Lewis X antigen. Critically involved in the synthesis of functional selectin ligands needed for neutrophil recruitment during inflammation and lymphocyte homing to the lymph nodes. In Pongo abelii (Sumatran orangutan), this protein is Type 2 lactosamine alpha-2,3-sialyltransferase (ST3GAL6).